The sequence spans 235 residues: MRFEQPLEEGRLLRRYKRFLADIESAGGERLTIHCPNTGSMLNCMSEGCRVWFSRSNDPKRKLPGTWELSETPQGRLACVNTARANRLVEEALLAGDIAELAGFTALRREVAYGVENSRADFRLEYPTGALFIEVKSVTLGFDETAVAAFPDAVTLRGAKHLRELAALAREGIRAVQLYCVNLSGVEAVRPADEIDPAYGKALREAAQAGVEVLAYGAEVTTEGLNLARRLPVRL.

It belongs to the SfsA family.

The sequence is that of Sugar fermentation stimulation protein homolog from Pseudomonas aeruginosa (strain ATCC 15692 / DSM 22644 / CIP 104116 / JCM 14847 / LMG 12228 / 1C / PRS 101 / PAO1).